The primary structure comprises 385 residues: MKIIKPTPIKRVGKHDRERRVLLGLVDYYIQTGKPVGSNTLKEAGFEDLSSATIRNYFAQLEEEGYLLQSHSSGGRIPTDLAYRIYAHAYLNTNEPYPKQNPFEAFKSFESKEIAIFLQEAAEKLSWETNCAVFLSAPRFDHDFIANLKLVPLDAYRCLCIIMTDFGVIKTEVMHLPVKLSSFGIKRIENYFHCRLTNLGEPENLEPEEETVAQTFYNELMLRYIVGYSNFIDVDLYRTGFSRLLFYSDFQDTNLLASSLSLFENAHSMRLLLKECKALNHLRFWIGDDLSSFANSSPRCSVLTIPYYINYKPVGAVGLLGPTRLPYRALFSLLKLFSDCISETVTKNVYKFKIDYRQPEQSLYLKKEESLLIGQSRFLIEDKRP.

It belongs to the HrcA family.

Negative regulator of class I heat shock genes (grpE-dnaK-dnaJ and groELS operons). Prevents heat-shock induction of these operons. The protein is Heat-inducible transcription repressor HrcA of Protochlamydia amoebophila (strain UWE25).